Reading from the N-terminus, the 301-residue chain is Ribosomal protein L11 methyltransferase (301 aa).

Thr-147, Gly-168, Asp-190, and Asn-237 together coordinate S-adenosyl-L-methionine.

This sequence belongs to the methyltransferase superfamily. PrmA family.

The protein localises to the cytoplasm. It catalyses the reaction L-lysyl-[protein] + 3 S-adenosyl-L-methionine = N(6),N(6),N(6)-trimethyl-L-lysyl-[protein] + 3 S-adenosyl-L-homocysteine + 3 H(+). Methylates ribosomal protein L11. This is Ribosomal protein L11 methyltransferase from Synechococcus sp. (strain RCC307).